Consider the following 195-residue polypeptide: GTP cyclohydrolase 1 (195 aa).

Residues C85, H88, and C157 each coordinate Zn(2+).

Belongs to the GTP cyclohydrolase I family. Toroid-shaped homodecamer, composed of two pentamers of five dimers.

The catalysed reaction is GTP + H2O = 7,8-dihydroneopterin 3'-triphosphate + formate + H(+). It functions in the pathway cofactor biosynthesis; 7,8-dihydroneopterin triphosphate biosynthesis; 7,8-dihydroneopterin triphosphate from GTP: step 1/1. This is GTP cyclohydrolase 1 from Clostridium acetobutylicum (strain ATCC 824 / DSM 792 / JCM 1419 / IAM 19013 / LMG 5710 / NBRC 13948 / NRRL B-527 / VKM B-1787 / 2291 / W).